The chain runs to 309 residues: Dehydrogenase/reductase SDR family member 7B (309 aa).

The Cytoplasmic segment spans residues 1 to 5; the sequence is MERAL. A helical; Signal-anchor for type II membrane protein membrane pass occupies residues 6-26; the sequence is GVGIGPLAAGTVGLLILLKVI. Over 27 to 271 the chain is Lumenal; the sequence is QRLRRRPNIQ…LKAVCQKKKD (245 aa). The NAD(+) site is built by serine 47 and leucine 49. Residue serine 179 coordinates substrate. NAD(+) is bound by residues tyrosine 192, lysine 196, and threonine 227. The Proton acceptor role is filled by tyrosine 192.

This sequence belongs to the short-chain dehydrogenases/reductases (SDR) family.

The protein resides in the endoplasmic reticulum membrane. Functionally, putative oxidoreductase. This is Dehydrogenase/reductase SDR family member 7B (dhrs7b) from Danio rerio (Zebrafish).